A 345-amino-acid polypeptide reads, in one-letter code: Delta(6)-protoilludene synthase (345 aa).

Mg(2+)-binding residues include Asp84, Asn220, Ser224, and Glu228. Residues 84–88 carry the DDXXD motif motif; sequence DEYSD. (2E,6E)-farnesyl diphosphate contacts are provided by Arg309 and Tyr310.

The protein belongs to the terpene synthase family. Monomer. Requires Mg(2+) as cofactor.

It catalyses the reaction (2E,6E)-farnesyl diphosphate = Delta(6)-protoilludene + diphosphate. The protein operates within secondary metabolite biosynthesis. Its function is as follows. Delta(6)-protoilludene synthase, part of the gene cluster that mediates the biosynthesis of melleolides, a range of antifungal and phytotoxic polyketide derivatives composed of an orsellinic acid (OA) moiety esterified to various sesquiterpene alcohols. The first step in melleolides biosynthesis is performed by the delta(6)-protoilludene synthase PRO1 which catalyzes the cyclization of farnesyl diphosphate to protoilludene. The orsellinic acid synthase armB produces OA by condensing acetyl-CoA with 3 malonyl-CoA units in a three-round chain elongation reaction folowed by a C2-C7 ring closure. ArmB further catalyzes the trans-esterification of OA to the various sesquiterpene alcohols resulting from the hydroxylation of protoilludene. The melleolides cluster also includes 5 cytochrome P450 monooxygenases, 4 NAD(+)-dependent oxidoreductases, one flavin-dependent oxidoreductase, and one O-methyltransferase. The cytochrome P450 monooxygenases may be involved in protoilludene hydroxylation to elaborate melleolides with multiple alcohol groups, such as melleolide D, which carries alcohol functionalities at C-4, C-5, C-10, and C-13. The role of the NAD(+)-dependent enzymes remains unknown. Numerous melleolides, including arnamial, show 5'-O-methylation of the aromatic moiety which may be catalyzed by the methyltransferase encoded in the cluster. The flavin-dependent oxidoreductase might represent the dehydrogenase yielding the aldehyde in position 1 of arnamial and other melleolides. Finally, several halogenases, localized outside of the cluster, are able to catalyze the transfer of a single chlorine atom to the melleolide backbone, resulting in a 6'-chloromelleolide product. The polypeptide is Delta(6)-protoilludene synthase (Armillaria gallica (Bulbous honey fungus)).